We begin with the raw amino-acid sequence, 145 residues long: Hemoglobin subunit beta-A (145 aa).

In terms of domain architecture, Globin spans 1–145; that stretch reads MLTAEEKAAV…VANALAHRYH (145 aa). Residues histidine 62 and histidine 91 each contribute to the heme b site.

Belongs to the globin family. As to quaternary structure, heterotetramer of two alpha chains and two beta chains. Red blood cells.

Its function is as follows. Involved in oxygen transport from the lung to the various peripheral tissues. This chain is Hemoglobin subunit beta-A, found in Bos javanicus (Wild banteng).